The following is a 335-amino-acid chain: Methylthioribose-1-phosphate isomerase (335 aa).

Residues 43 to 45 (RGA), Arg86, and Gln193 each bind substrate. Asp234 acts as the Proton donor in catalysis. 244–245 (NK) contacts substrate.

Belongs to the eIF-2B alpha/beta/delta subunits family. MtnA subfamily.

It carries out the reaction 5-(methylsulfanyl)-alpha-D-ribose 1-phosphate = 5-(methylsulfanyl)-D-ribulose 1-phosphate. Its pathway is amino-acid biosynthesis; L-methionine biosynthesis via salvage pathway; L-methionine from S-methyl-5-thio-alpha-D-ribose 1-phosphate: step 1/6. Functionally, catalyzes the interconversion of methylthioribose-1-phosphate (MTR-1-P) into methylthioribulose-1-phosphate (MTRu-1-P). The polypeptide is Methylthioribose-1-phosphate isomerase (Parabacteroides distasonis (strain ATCC 8503 / DSM 20701 / CIP 104284 / JCM 5825 / NCTC 11152)).